The primary structure comprises 386 residues: Protein lin-8 (386 aa).

The interval 175–285 is sufficient for interaction with lin-35; sequence LGLEARRASK…FSQQYGGGGS (111 aa). The interval 212 to 240 is disordered; sequence EEPYEETGSNWSDPAPEPSQSKSQSPEAK. A compositionally biased stretch (low complexity) spans 229–240; the sequence is PSQSKSQSPEAK.

The protein belongs to the lin-8 family. Interacts with lin-35 (via C-terminus). As to expression, widely expressed throughout development, with particularly prominent expression in the germline and in neuronal nuclei of the head (at protein level).

It localises to the nucleus. Acts as a synthetic multivulva class A (synMuvA) protein and redundantly inhibits lin-3/EGF expression to prevent inappropriate vulva induction. This Caenorhabditis elegans protein is Protein lin-8.